Reading from the N-terminus, the 79-residue chain is Small ribosomal subunit protein bS18 (79 aa).

The protein belongs to the bacterial ribosomal protein bS18 family. In terms of assembly, part of the 30S ribosomal subunit. Forms a tight heterodimer with protein bS6.

Its function is as follows. Binds as a heterodimer with protein bS6 to the central domain of the 16S rRNA, where it helps stabilize the platform of the 30S subunit. This is Small ribosomal subunit protein bS18 from Bacillus pumilus (strain SAFR-032).